The following is a 347-amino-acid chain: LRP2-binding protein (347 aa).

Residues 59-92 (TLAYFLRGQLYFEEGWYEEALEQFEEIKEKDHQA) form a TPR repeat. Sel1-like repeat units lie at residues 93 to 125 (TYQL…DSPC), 133 to 168 (FAAA…DNGN), 173 to 206 (VKAQ…GNGN), 207 to 242 (LESQ…ERGN), 243 to 277 (VYAQ…EVHD), and 297 to 332 (AMAS…RLNP).

Interacts with LRP2.

The protein resides in the cytoplasm. Functionally, may act as an adapter that regulates LRP2 function. This is LRP2-binding protein (LRP2BP) from Homo sapiens (Human).